An 827-amino-acid polypeptide reads, in one-letter code: Putative transcriptional regulatory protein C16G5.16 (827 aa).

A DNA-binding region (zn(2)-C6 fungal-type) is located at residues 16–42 (CDECHRRKIKCDQRRPCSNCIAYNYEC). Disordered regions lie at residues 80–114 (LKLP…SSQD), 158–193 (TVPN…HKKP), and 794–827 (QPPS…KRTE). Residues 102–112 (KRSDSSKRSSS) show a composition bias toward basic and acidic residues. A Phosphoserine modification is found at Ser-112. Composition is skewed to low complexity over residues 159 to 179 (VPNP…LSFP) and 811 to 827 (SNNS…KRTE).

This sequence belongs to the ASG1 family.

It localises to the cytoplasm. Its subcellular location is the nucleus. This is Putative transcriptional regulatory protein C16G5.16 from Schizosaccharomyces pombe (strain 972 / ATCC 24843) (Fission yeast).